The primary structure comprises 309 residues: Aspartate carbamoyltransferase catalytic subunit (309 aa).

Residues arginine 58 and threonine 59 each contribute to the carbamoyl phosphate site. Lysine 87 contributes to the L-aspartate binding site. 3 residues coordinate carbamoyl phosphate: arginine 108, histidine 136, and glutamine 139. Residues arginine 168 and arginine 229 each coordinate L-aspartate. Carbamoyl phosphate contacts are provided by leucine 268 and proline 269.

Belongs to the aspartate/ornithine carbamoyltransferase superfamily. ATCase family. In terms of assembly, heterooligomer of catalytic and regulatory chains.

It catalyses the reaction carbamoyl phosphate + L-aspartate = N-carbamoyl-L-aspartate + phosphate + H(+). It functions in the pathway pyrimidine metabolism; UMP biosynthesis via de novo pathway; (S)-dihydroorotate from bicarbonate: step 2/3. Its function is as follows. Catalyzes the condensation of carbamoyl phosphate and aspartate to form carbamoyl aspartate and inorganic phosphate, the committed step in the de novo pyrimidine nucleotide biosynthesis pathway. In Methanosarcina mazei (strain ATCC BAA-159 / DSM 3647 / Goe1 / Go1 / JCM 11833 / OCM 88) (Methanosarcina frisia), this protein is Aspartate carbamoyltransferase catalytic subunit.